The primary structure comprises 129 residues: Small ribosomal subunit protein uS9 (129 aa).

The protein belongs to the universal ribosomal protein uS9 family.

The sequence is that of Small ribosomal subunit protein uS9 from Aliarcobacter butzleri (strain RM4018) (Arcobacter butzleri).